Here is a 200-residue protein sequence, read N- to C-terminus: Non-specific lipid transfer protein GPI-anchored 16 (200 aa).

A signal peptide spans 1 to 20 (MEGLTLIVVMMSSFMLGGQG). 4 cysteine pairs are disulfide-bonded: Cys27/Cys72, Cys38/Cys56, Cys57/Cys98, and Cys70/Cys107. Asn87 carries an N-linked (GlcNAc...) asparagine glycan. Residues 134-182 (SPGASKAAGTTPTQAPAPDTPADGPTGPTTKSGIRPVDQPMQPTGLAQS) are disordered. Low complexity predominate over residues 140-163 (AAGTTPTQAPAPDTPADGPTGPTT). A lipid anchor (GPI-anchor amidated threonine) is attached at Thr177. A propeptide spans 178-200 (GLAQSSTSPFLPLLFISLILLNL) (removed in mature form).

It belongs to the plant LTP family. As to expression, expressed in seedlings, preferentially in hypocotyls and roots. Also observed in siliques.

It localises to the cell membrane. Its function is as follows. Essential protein involved in female gametophyte development. Probable lipid transfer protein. This chain is Non-specific lipid transfer protein GPI-anchored 16, found in Arabidopsis thaliana (Mouse-ear cress).